The following is a 568-amino-acid chain: Sentrin-specific protease 3 (568 aa).

A disordered region spans residues 1-119; sequence MKETIQGTGS…PSHRKTCSQR (119 aa). Phosphoserine occurs at positions 52, 71, and 73. Residues 72–87 are compositionally biased toward acidic residues; sequence ASEEEEEEEEEDEEEV. The segment covering 106–119 has biased composition (basic residues); the sequence is RALRPSHRKTCSQR. 2 short sequence motifs (nuclear localization signal) span residues 119 to 122 and 147 to 153; these read RRRR and RHRGRRR. The disordered stretch occupies residues 155 to 174; the sequence is LAHPKNHLSPQEGGATPQVP. Ser-163 is subject to Phosphoserine. Thr-170 carries the phosphothreonine modification. A phosphoserine mark is found at Ser-175, Ser-182, Ser-206, and Ser-226. The segment at 380-537 is protease; sequence HVLTMDDLGT…AFVLQYCKHL (158 aa). Residues His-459 and Asp-476 contribute to the active site. Cys-526 serves as the catalytic Nucleophile.

It belongs to the peptidase C48 family. Component of some MLL1/MLL complex, at least composed of the core components KMT2A/MLL1, ASH2L, HCFC1/HCF1, WDR5 and RBBP5, as well as the facultative components BACC1, CHD8, E2F6, HSP70, INO80C, KANSL1, LAS1L, MAX, MCRS1, MGA, MYST1/MOF, PELP1, PHF20, PRP31, RING2, RUVB1/TIP49A, RUVB2/TIP49B, SENP3, TAF1, TAF4, TAF6, TAF7, TAF9 and TEX10. Interacts with EP300, NPM1 and CDCA8. Component of the 5FMC complex, at least composed of PELP1, LAS1L, TEX10, WDR18 and SENP3; the complex interacts with methylated CHTOP and ZNF148. Interacts with NOL9. Interacts with CCAR2.

Its subcellular location is the nucleus. It is found in the nucleolus. It localises to the nucleoplasm. The protein localises to the cytoplasm. On oxidative stress, SENP3 degradation is blocked by inhibition of its ubiquitination, which stabilizes it as it accumulates in the nucleoplasm. In terms of biological role, protease that releases SUMO2 and SUMO3 monomers from sumoylated substrates, but has only weak activity against SUMO1 conjugates. Deconjugates SUMO2 from MEF2D, which increases its transcriptional activation capability. Deconjugates SUMO2 and SUMO3 from CDCA8. Redox sensor that, when redistributed into nucleoplasm, can act as an effector to enhance HIF1A transcriptional activity by desumoylating EP300. Required for rRNA processing through deconjugation of SUMO2 and SUMO3 from nucleophosmin, NPM1. Plays a role in the regulation of sumoylation status of ZNF148. Functions as a component of the Five Friends of Methylated CHTOP (5FMC) complex; the 5FMC complex is recruited to ZNF148 by methylated CHTOP, leading to desumoylation of ZNF148 and subsequent transactivation of ZNF148 target genes. Deconjugates SUMO2 from KAT5. Catalyzes desumoylation of MRE11. The protein is Sentrin-specific protease 3 (Senp3) of Mus musculus (Mouse).